The primary structure comprises 80 residues: RNA-binding protein KhpA (80 aa).

The 48-residue stretch at 33–80 folds into the KH domain; that stretch reads LEILQLRVASEDVGKVIGKHGRIARALRTLLSASAHASQTRYALEIID.

This sequence belongs to the KhpA RNA-binding protein family. Forms a complex with KhpB.

It localises to the cytoplasm. In terms of biological role, a probable RNA chaperone. Forms a complex with KhpB which binds to cellular RNA and controls its expression. Plays a role in peptidoglycan (PG) homeostasis and cell length regulation. The polypeptide is RNA-binding protein KhpA (Treponema pallidum (strain Nichols)).